The chain runs to 156 residues: Small ribosomal subunit protein uS7c (156 aa).

This sequence belongs to the universal ribosomal protein uS7 family. As to quaternary structure, part of the 30S ribosomal subunit.

The protein resides in the plastid. It is found in the chloroplast. In terms of biological role, one of the primary rRNA binding proteins, it binds directly to 16S rRNA where it nucleates assembly of the head domain of the 30S subunit. The sequence is that of Small ribosomal subunit protein uS7c (rps7) from Phaeodactylum tricornutum (strain CCAP 1055/1).